The following is an 86-amino-acid chain: Small ribosomal subunit protein uS17 (86 aa).

It belongs to the universal ribosomal protein uS17 family. In terms of assembly, part of the 30S ribosomal subunit.

Functionally, one of the primary rRNA binding proteins, it binds specifically to the 5'-end of 16S ribosomal RNA. This is Small ribosomal subunit protein uS17 from Lactococcus lactis subsp. cremoris (strain MG1363).